Here is a 346-residue protein sequence, read N- to C-terminus: tRNA N6-adenosine threonylcarbamoyltransferase (346 aa).

Residues histidine 111 and histidine 115 each contribute to the Fe cation site. Residues leucine 134–glycine 138, aspartate 167, glycine 180, aspartate 184, and asparagine 279 each bind substrate. Aspartate 307 is a Fe cation binding site.

The protein belongs to the KAE1 / TsaD family. The cofactor is Fe(2+).

The protein resides in the cytoplasm. The enzyme catalyses L-threonylcarbamoyladenylate + adenosine(37) in tRNA = N(6)-L-threonylcarbamoyladenosine(37) in tRNA + AMP + H(+). Functionally, required for the formation of a threonylcarbamoyl group on adenosine at position 37 (t(6)A37) in tRNAs that read codons beginning with adenine. Is involved in the transfer of the threonylcarbamoyl moiety of threonylcarbamoyl-AMP (TC-AMP) to the N6 group of A37, together with TsaE and TsaB. TsaD likely plays a direct catalytic role in this reaction. This is tRNA N6-adenosine threonylcarbamoyltransferase from Nostoc sp. (strain PCC 7120 / SAG 25.82 / UTEX 2576).